The following is a 213-amino-acid chain: Protein DMP4 (213 aa).

A run of 4 helical transmembrane segments spans residues 51–71 (LANL…PIFS), 78–98 (LVSK…CFIL), 142–162 (FIDF…VLFD), and 180–200 (VLTA…ATFP).

It belongs to the plant DMP1 protein family. In terms of tissue distribution, expressed in leaves, flowers and siliques, especially in vascular tissues.

It localises to the vacuole membrane. Functionally, involved in membrane remodeling. The protein is Protein DMP4 of Arabidopsis thaliana (Mouse-ear cress).